We begin with the raw amino-acid sequence, 899 residues long: Protein translocase subunit SecA (899 aa).

Residues glutamine 87, 105–109 (GEGKT), and aspartate 512 each bind ATP. 2 disordered regions span residues 573 to 592 (RRID…PGSS) and 861 to 899 (ITVN…CCGK). Residues cysteine 885, cysteine 887, cysteine 896, and cysteine 897 each coordinate Zn(2+).

It belongs to the SecA family. As to quaternary structure, monomer and homodimer. Part of the essential Sec protein translocation apparatus which comprises SecA, SecYEG and auxiliary proteins SecDF-YajC and YidC. It depends on Zn(2+) as a cofactor.

It localises to the cell inner membrane. The protein resides in the cytoplasm. It catalyses the reaction ATP + H2O + cellular proteinSide 1 = ADP + phosphate + cellular proteinSide 2.. Functionally, part of the Sec protein translocase complex. Interacts with the SecYEG preprotein conducting channel. Has a central role in coupling the hydrolysis of ATP to the transfer of proteins into and across the cell membrane, serving as an ATP-driven molecular motor driving the stepwise translocation of polypeptide chains across the membrane. In Trichlorobacter lovleyi (strain ATCC BAA-1151 / DSM 17278 / SZ) (Geobacter lovleyi), this protein is Protein translocase subunit SecA.